Here is a 698-residue protein sequence, read N- to C-terminus: Probable xyloglucan glycosyltransferase 2 (698 aa).

A run of 2 helical transmembrane segments spans residues 124–144 (GFLA…WNGW) and 190–210 (ILLF…CFWI). D272 is a catalytic residue. Substrate is bound by residues D331 and D333. D425 is a catalytic residue. 4 consecutive transmembrane segments (helical) span residues 503-523 (LILP…TMFV), 528-548 (LPVW…ILPS), 653-668 (LALS…RSLL), and 673-693 (IHFY…LDLI).

The protein belongs to the glycosyltransferase 2 family. Plant cellulose synthase-like C subfamily.

Its subcellular location is the golgi apparatus membrane. Its function is as follows. Probable beta-1,4-glucan synthase rather involved in the synthesis of the xyloglucan backbone than cellulose. Seems to work simultaneously with xyloglucan 6-xylosyltransferase. Xyloglucan is a noncellulosic polysaccharides of plant cell wall and consists of a glucan backbone substituted by xylose, galactose and fucose. The polypeptide is Probable xyloglucan glycosyltransferase 2 (CSLC2) (Oryza sativa subsp. indica (Rice)).